Reading from the N-terminus, the 124-residue chain is MAKLTNEDILNAIADMSVIDVVELVSAMEEKFGVSATAVTPVAVVADVDNTVVEKDEFDIMLTSFGEKKVAVIKAVRSITGLGLKESKDMVESAPVVIKESASKIEAEDIERQLKEVGASVELK.

Belongs to the bacterial ribosomal protein bL12 family. Homodimer. Part of the ribosomal stalk of the 50S ribosomal subunit. Forms a multimeric L10(L12)X complex, where L10 forms an elongated spine to which 2 to 4 L12 dimers bind in a sequential fashion. Binds GTP-bound translation factors.

In terms of biological role, forms part of the ribosomal stalk which helps the ribosome interact with GTP-bound translation factors. Is thus essential for accurate translation. The protein is Large ribosomal subunit protein bL12 of Vesicomyosocius okutanii subsp. Calyptogena okutanii (strain HA).